Here is a 347-residue protein sequence, read N- to C-terminus: Protein RecA (347 aa).

66 to 73 (GPESSGKT) provides a ligand contact to ATP.

This sequence belongs to the RecA family.

It localises to the cytoplasm. In terms of biological role, can catalyze the hydrolysis of ATP in the presence of single-stranded DNA, the ATP-dependent uptake of single-stranded DNA by duplex DNA, and the ATP-dependent hybridization of homologous single-stranded DNAs. It interacts with LexA causing its activation and leading to its autocatalytic cleavage. The polypeptide is Protein RecA (Allochromatium vinosum (Chromatium vinosum)).